A 421-amino-acid chain; its full sequence is ATP-dependent RNA helicase RhlB (421 aa).

The Q motif signature appears at 9 to 37; the sequence is QKFSDFALHPQVVEALEKKGFYNCTPIQA. Residues 40 to 219 form the Helicase ATP-binding domain; that stretch reads LPLTLAGRDV…FEQMNNAEYV (180 aa). 53–60 lines the ATP pocket; sequence AQTGTGKT. The DEAD box motif lies at 165-168; it reads DEAD. The Helicase C-terminal domain occupies 245–390; that stretch reads RLLQTLIEEE…VSKYNPEALM (146 aa). The tract at residues 396-421 is disordered; it reads PLRLTRSRPGNGPRRAGAPRNRRRSG. A compositionally biased stretch (low complexity) spans 402–414; sequence SRPGNGPRRAGAP.

This sequence belongs to the DEAD box helicase family. RhlB subfamily. Component of the RNA degradosome, which is a multiprotein complex involved in RNA processing and mRNA degradation.

The protein localises to the cytoplasm. The enzyme catalyses ATP + H2O = ADP + phosphate + H(+). Functionally, DEAD-box RNA helicase involved in RNA degradation. Has RNA-dependent ATPase activity and unwinds double-stranded RNA. In Salmonella arizonae (strain ATCC BAA-731 / CDC346-86 / RSK2980), this protein is ATP-dependent RNA helicase RhlB.